The chain runs to 259 residues: MQWQDHAIILGVKRLGETSVIAEVMTRDRGRHMGLVRSGRSRSMQPVLQPGNLVEVTWRARLHEHLGEFRMEPVRLRAARLMETATAVYGVQAMGALLRLLPERDPHPYLYDALDVILENMQNPMDAGELFVRFELAVLNELGYGLDLGECAATGVRDDLAFVSPKTGRAVCRTAGAPWADKMLALPPFLAAGTVEAANGESLAAAFRLTGFFLHRHVYEPRGIEIAAAREGFIQAALKAVNAVSLDRPDNPPVIAAKR.

The protein belongs to the RecO family.

In terms of biological role, involved in DNA repair and RecF pathway recombination. The chain is DNA repair protein RecO from Rhizobium rhizogenes (strain K84 / ATCC BAA-868) (Agrobacterium radiobacter).